Here is a 277-residue protein sequence, read N- to C-terminus: Undecaprenyl-diphosphatase (277 aa).

Transmembrane regions (helical) follow at residues 3–23, 44–64, 82–102, 109–129, 189–209, 218–238, and 253–273; these read IALLIKAAIMGIVEGLTEFLP, AKVFDIAIQTGAIFAVILVYW, QFALNVLVAFVPAVVLGLLFG, LFTPVVVASAFIVGGFIILWA, TDFSFYLAIPTLIGAGAYSLF, ADAPMFGVGLLFSFLSAWLCI, and FAWYRIAFGIVVLATAWSGVV.

It belongs to the UppP family.

Its subcellular location is the cell inner membrane. It carries out the reaction di-trans,octa-cis-undecaprenyl diphosphate + H2O = di-trans,octa-cis-undecaprenyl phosphate + phosphate + H(+). In terms of biological role, catalyzes the dephosphorylation of undecaprenyl diphosphate (UPP). Confers resistance to bacitracin. The protein is Undecaprenyl-diphosphatase of Polaromonas naphthalenivorans (strain CJ2).